The sequence spans 337 residues: Hsp90 co-chaperone Cdc37-like 1 (337 aa).

Residues 1-11 (MEQPWPPPGPW) show a composition bias toward pro residues. Positions 1–42 (MEQPWPPPGPWSLPRAEGEAEEENDLDVFPSSPRCPQLPGGS) are disordered. Positions 2 to 171 (EQPWPPPGPW…YEQKIRHFGM (170 aa)) are self-association. Phosphoserine occurs at positions 32 and 88. Positions 85–122 (NSESLDQEHAKAQIAVSELRQREEEWRQKEEALVQREK) form a coiled coil. Residues 147–277 (KDTEDEDKSE…SRVRLYSQSQ (131 aa)) form a self-association and interaction with Hsp90 region. An interaction with Hsp70 region spans residues 267 to 337 (KSRVRLYSQS…DDEPKMMDTV (71 aa)). The tract at residues 278–337 (SFQPMTVQNHVPHSGVGSIGLLESLPQNPDYLQYSINTALCSLNSVVHKEDDEPKMMDTV) is required for interaction with STIP1.

It belongs to the CDC37 family. As to quaternary structure, self-associates. Forms complexes with Hsp70 and Hsp90. Interacts with CDC37, FKBP4, PPID and STIP1.

The protein resides in the cytoplasm. In terms of biological role, co-chaperone that binds to numerous proteins and promotes their interaction with Hsp70 and Hsp90. This is Hsp90 co-chaperone Cdc37-like 1 (CDC37L1) from Pongo abelii (Sumatran orangutan).